Reading from the N-terminus, the 321-residue chain is MESNGVPMITLSSGIRMPALGMGTAETMVKGTEREKLAFLKAIEVGYRHFDTAAAYQSEECLGEAIAEALQLGLIKSRDELFITSKLWCADAHADLVLPALQNSLRNLKLDYLDLYLIHHPVSLKPGKFVNEIPKDHILPMDYKSVWAAMEECQTLGFTRAIGVCNFSCKKLQELMAAAKIPPVVNQVEMSPTLHQKNLREYCKANNIMITAHSVLGAICAPWGSNAVMDSKVLHQIAVARGKSVAQVSMRWVYQQGASLVVKSFNEGRMKENLKIFDWELTAENMEKISEIPQSRTSSADFLLSPTGPFKTEEEFWDEKD.

NADPH contacts are provided by T27 and D51. Residues Y56 and H119 each act as proton donor in the active site. Position 119 (H119) interacts with substrate. Residues Q187, S214, L216, S264, and R269 each coordinate NADPH. The tract at residues 300–321 (ADFLLSPTGPFKTEEEFWDEKD) is disordered.

This sequence belongs to the aldo/keto reductase family. As to expression, latex secreting cells (laticifer cells). Expressed constitutively in all organs with highest levels in capsules. Restricted to the parietal region of sieve elements adjacent or proximal to laticifers in roots, stems, leaves and carpels.

The protein localises to the cytoplasm. The protein resides in the cytosol. It carries out the reaction codeine + NADP(+) = codeinone + NADPH + H(+). The catalysed reaction is neopine + NADP(+) = neopinone + NADPH + H(+). The enzyme catalyses morphine + NADP(+) = morphinone + NADPH + H(+). It catalyses the reaction neomorphine + NADP(+) = neomorphinone + NADPH + H(+). It participates in alkaloid biosynthesis; morphine biosynthesis. Functionally, NADPH-dependent codeinone reductase involved in biosynthesis of morphinan-type benzylisoquinoline and opiate alkaloids natural products. Reduces codeinone to codeine in the penultimate step in morphine biosynthesis. Can use morphinone, hydrocodone and hydromorphone as substrate during reductive reaction with NADPH as cofactor, and morphine and dihydrocodeine as substrate during oxidative reaction with NADP as cofactor. Converts morphinone to morphine, and neomorphinone to neomorphine. Reduces irreversibly neopinone, a spontaneous isomer of codeinone, to neopine; in planta, neopine levels are limited to low levels. The sequence is that of NADPH-dependent codeinone reductase 1-3 from Papaver somniferum (Opium poppy).